We begin with the raw amino-acid sequence, 403 residues long: Argininosuccinate synthase (403 aa).

8-16 is an ATP binding site; sequence AYSGGLDTS. An L-citrulline-binding site is contributed by Y87. Position 117 (G117) interacts with ATP. L-aspartate-binding residues include T119, N123, and D124. N123 serves as a coordination point for L-citrulline. L-citrulline-binding residues include R127, S175, E259, and Y271.

The protein belongs to the argininosuccinate synthase family. Type 1 subfamily. In terms of assembly, homotetramer.

It localises to the cytoplasm. The catalysed reaction is L-citrulline + L-aspartate + ATP = 2-(N(omega)-L-arginino)succinate + AMP + diphosphate + H(+). It participates in amino-acid biosynthesis; L-arginine biosynthesis; L-arginine from L-ornithine and carbamoyl phosphate: step 2/3. The chain is Argininosuccinate synthase from Salinispora arenicola (strain CNS-205).